The primary structure comprises 969 residues: MGEQSHEKDHDEAHSYNPFVRSAVEYDADTRLQMAENAASARKLFVSSALKDIIVNPENFYHDFQQSAQMAEDANQRRQVSYNTKREAHIHQLKAQGLPLPSNIPMIEINPTRVTLNMEFESQYYSLMTSDNGDHENVASIMAETNTLIQLPDRSVGGTTPDPFAQQVTITGYFGDVDRARMLMRRNCHFTVFMALSKMKMPLHELQAHVRQNPIQNVEMSFVDAPEKNGIVTTYLRITAREKNQHELIEAAKRLNEILFRESPAPENNFTLHFTLSTYYVDQVLGSSSTAQLMPVIERETTTIISYPCYNNRNETRGNIYEIKVVGNIDNVLKARRYIMDLLPISMCFNIKNTDMAEPSRVSDRNIHMIIDESGIILKMTPSVYEPADLLSGEVPLNCASLRSKEFNIKKLYTAYQKVLSKKFDFIAPQPNDYDNSIWHHSLPANFLKNFNMPCRGELSDGSNGRRHRSSSIASSRSKHSYMSKGKQFSESSGGPSRSHTRVSSFSENSSTVPIMQFPTPHFAPPMLTPHHHMLKYVYLQQHQQAQTFLKGAAGLHPGTHIMFPPPIIVDGSFVSALPFADPVVFDGFPYVHGLFPVNEAEQHRNHRESSPSLRSTQEIRKPSRNMGNRPSSSTGSYYPSTTPRQRVYEQVREDDLRSHIGSRRTSVNGDDQNVESMHDQGYERQYPRQHQRLQKDDQQRWKTGSRGDIHSSRTINVHRDVRNSNEYDFHVGNSGPAKRSPSLEQVQLQMTHHLKLKSNDVDLDHEKLYMHESPHNDSDTTVSASGFGNDLMDGDFVQRFLSNANINESGRRPRTVSCFTEKDGQSARYIDSDGAYSVVDHASTHQSRSYDSFRKVGDNGVTKTILEPRARVEKDYGKISLEHKTKYSNEYGDEEKSAENDTSSLGSRQYRIDPMKLIASVRESSEQLPRIHERQFSDVLNEKEKEIADKSIESTVTQDLSLDETSTY.

Positions Met-34–Ser-81 are gld-2-binding. KH domains follow at residues Met-34–Ile-109, Arg-113–Asn-187, His-189–Leu-259, Phe-270–Leu-342, and Pro-344–Val-419. A gls-1-binding region spans residues Pro-57–Ser-471. 2 disordered regions span residues Leu-459 to Glu-508 and Glu-602 to His-711. Positions Lys-487–Glu-508 are enriched in polar residues. The span at Pro-631–Pro-644 shows a compositional bias: low complexity. Residues Arg-647 to Ser-659 are compositionally biased toward basic and acidic residues. Polar residues predominate over residues Arg-664–Glu-676. 2 stretches are compositionally biased toward basic and acidic residues: residues Ser-677–Tyr-687 and Leu-694–His-711. Positions Leu-769–Tyr-969 are gls-1-binding. A fbf-1-binding region spans residues Asn-860–Ala-949. The segment at Asp-950–Tyr-969 is disordered. A compositionally biased stretch (polar residues) spans Glu-954 to Tyr-969.

As to quaternary structure, interacts (via its KH1 domain) with gld-2. Isoform A but not isoform B interacts specifically with fbf-1 and fbf-2 in an RNA-independent manner. Isoform A interacts with gls-1 isoform C. Expressed in the germline (at protein level). In adult hermaphrodites, first detected in the transition zone (TZ), weakly expressed in the early mitotic region and in pachytene germ cells, and becomes more abundantly expressed as germ cells enter diakinesis (at protein level). Expressed in primary spermatocytes, but not in secondary spermatocytes or adult sperm (at protein level).

The protein localises to the cytoplasm. It localises to the cytoplasmic granule. Its subcellular location is the perinuclear region. Its function is as follows. Required maternally for germline survival and embryogenesis. Forms a complex with gls-1 which promotes the oogenic cell fate by freeing the translational repressor fbf to repress sperm promoting factors. Promotes maturation of primary spermatocytes to mature sperm. Required during hermaphrodite development to promote sperm fate, which is critical for determining the normal number of sperm. Promotion of sperm fate is at the expense of oogenesis, possibly through the negative regulation of fbf. Required during male development for the continued production of sperm and inhibition of oogenesis. Together with gld-2, promotes the transition from mitosis to meiosis. Required for polyadenylation of neg-1 mRNA during embryogenesis. This Caenorhabditis elegans protein is Defective in germ line development protein 3.